An 89-amino-acid polypeptide reads, in one-letter code: Small ribosomal subunit protein uS15 (89 aa).

This sequence belongs to the universal ribosomal protein uS15 family. In terms of assembly, part of the 30S ribosomal subunit. Forms a bridge to the 50S subunit in the 70S ribosome, contacting the 23S rRNA.

Functionally, one of the primary rRNA binding proteins, it binds directly to 16S rRNA where it helps nucleate assembly of the platform of the 30S subunit by binding and bridging several RNA helices of the 16S rRNA. Its function is as follows. Forms an intersubunit bridge (bridge B4) with the 23S rRNA of the 50S subunit in the ribosome. The sequence is that of Small ribosomal subunit protein uS15 from Photobacterium profundum (strain SS9).